The sequence spans 327 residues: Probable cell division protein WhiA (327 aa).

The H-T-H motif DNA-binding region spans 275-308 (SLEELGRLADPQMTKDAVAGRIRRLLTTADKRAR).

It belongs to the WhiA family.

Involved in cell division and chromosome segregation. The chain is Probable cell division protein WhiA from Corynebacterium efficiens (strain DSM 44549 / YS-314 / AJ 12310 / JCM 11189 / NBRC 100395).